A 492-amino-acid chain; its full sequence is Metal cation symporter ZIP14 (492 aa).

An N-terminal signal peptide occupies residues 1 to 30 (MKLLLLHPAFQSCLLLTLLGLWRTTPEAHA). The Extracellular segment spans residues 31-157 (SSLGAPAISA…PSAVEVWGYG (127 aa)). N-linked (GlcNAc...) asparagine glycans are attached at residues Asn77, Asn87, and Asn102. A helical transmembrane segment spans residues 158–178 (LLCVTVISLCSLLGASVVPFM). Residues 179 to 186 (KKTFYKRL) are Cytoplasmic-facing. Residues 187-207 (LLYFIALAIGTLYSNALFQLI) traverse the membrane as a helical segment. Residues 208–224 (PEAFGFNPLEDYYVSKS) lie on the Extracellular side of the membrane. The chain crosses the membrane as a helical span at residues 225–245 (AVVFGGFYLFFFTEKILKILL). Residues 246–397 (KQKNEHHHGH…LLNAGMSIQQ (152 aa)) are Cytoplasmic-facing. The HHHGHXHX-motif signature appears at 251 to 258 (HHHGHSHY). The XEXPHE-motif motif lies at 376–381 (EEFPHE). A helical transmembrane segment spans residues 398–418 (ALFFNFLSACCCYLGLAFGIL). Residues 419-424 (AGSHFS) are Extracellular-facing. A helical transmembrane segment spans residues 425-445 (ANWIFALAGGMFLYISLADMF). The Cytoplasmic segment spans residues 446–460 (PEMNEVCQEDERKGS). The chain crosses the membrane as a helical span at residues 461 to 481 (ILIPFIIQNLGLLTGFTIMVV). The Extracellular segment spans residues 482 to 492 (LTMYSGQIQIG).

Belongs to the ZIP transporter (TC 2.A.5) family. As to quaternary structure, homotrimer. Ubiquitinated. Ubiquitination occurs upon iron depletion. The ubiquitinated form undergoes proteasomal degradation. In terms of processing, N-glycosylated. N-glycosylation at Asn-102 is required for iron-regulated extraction of the transporter from membranes and subsequent proteasomal degradation. Ubiquitously expressed, with higher expression in liver, pancreas, fetal liver, thyroid gland, left and right ventricle, right atrium and fetal heart. Weakly expressed in spleen, thymus, and peripheral blood leukocytes. Expressed in liver and in brain by large neurons in the globus pallidus, the insular cortex and the dentate nucleus and to a lower extent in the putamen and the caudate nucleus (at protein level). Expressed in osteoblasts and giant osteoclast-like cells, but not in osteocytes found osteoblastoma and giant cell tumors (at protein level). Expressed by microvascular capillary endothelial cells that constitute the blood-brain barrier (at protein level). Expressed by macrophages. In terms of tissue distribution, widely expressed but not detected in brain, heart, skeletal muscle, placenta and fetal skin.

Its subcellular location is the cell membrane. It localises to the apical cell membrane. The protein localises to the basolateral cell membrane. It is found in the early endosome membrane. The protein resides in the late endosome membrane. Its subcellular location is the lysosome membrane. The catalysed reaction is Zn(2+)(out) + 2 hydrogencarbonate(out) = Zn(2+)(in) + 2 hydrogencarbonate(in). It catalyses the reaction Mn(2+)(out) + 2 hydrogencarbonate(out) = Mn(2+)(in) + 2 hydrogencarbonate(in). The enzyme catalyses Fe(2+)(out) + 2 hydrogencarbonate(out) = Fe(2+)(in) + 2 hydrogencarbonate(in). It carries out the reaction Cd(2+)(out) + 2 hydrogencarbonate(out) = Cd(2+)(in) + 2 hydrogencarbonate(in). In terms of biological role, electroneutral transporter of the plasma membrane mediating the cellular uptake of the divalent metal cations zinc, manganese and iron that are important for tissue homeostasis, metabolism, development and immunity. Functions as an energy-dependent symporter, transporting through the membranes an electroneutral complex composed of a divalent metal cation and two bicarbonate anions. Beside these endogenous cellular substrates, can also import cadmium a non-essential metal which is cytotoxic and carcinogenic. Controls the cellular uptake by the intestinal epithelium of systemic zinc, which is in turn required to maintain tight junctions and the intestinal permeability. Modifies the activity of zinc-dependent phosphodiesterases, thereby indirectly regulating G protein-coupled receptor signaling pathways important for gluconeogenesis and chondrocyte differentiation. Regulates insulin receptor signaling, glucose uptake, glycogen synthesis and gluconeogenesis in hepatocytes through the zinc-dependent intracellular catabolism of insulin. Through zinc cellular uptake also plays a role in the adaptation of cells to endoplasmic reticulum stress. Major manganese transporter of the basolateral membrane of intestinal epithelial cells, it plays a central role in manganese systemic homeostasis through intestinal manganese uptake. Also involved in manganese extracellular uptake by cells of the blood-brain barrier. May also play a role in manganese and zinc homeostasis participating in their elimination from the blood through the hepatobiliary excretion. Also functions in the extracellular uptake of free iron. May also function intracellularly and mediate the transport from endosomes to cytosol of iron endocytosed by transferrin. Plays a role in innate immunity by regulating the expression of cytokines by activated macrophages. This Homo sapiens (Human) protein is Metal cation symporter ZIP14.